The following is a 914-amino-acid chain: TRPM8 channel-associated factor 2 (914 aa).

The Peptidase M60 domain maps to 541-840; that stretch reads DAWMSTGLNL…TYLQLQEAFG (300 aa).

The protein belongs to the TCAF family. In terms of assembly, interacts with TRPM8 (via N-terminus and C-terminus domains); the interaction inhibits TRPM8 channel activity. Interacts with TRPV6.

The protein localises to the cell membrane. In terms of biological role, negatively regulates the plasma membrane cation channel TRPM8 activity. Involved in the recruitment of TRPM8 to the cell surface. Promotes prostate cancer cell migration stimulation in a TRPM8-dependent manner. The chain is TRPM8 channel-associated factor 2 from Bos taurus (Bovine).